The sequence spans 423 residues: Mitogen-activated protein kinase 9 (423 aa).

One can recognise a Protein kinase domain in the interval 26 to 321 (YQQLKPIGSG…VDEALRHPYI (296 aa)). ATP is bound by residues 32-40 (IGSGAQGIV) and lysine 55. Aspartate 151 serves as the catalytic Proton acceptor. Threonine 183 carries the post-translational modification Phosphothreonine; by MAP2K7. A TXY motif is present at residues 183-185 (TPY). Phosphotyrosine; by MAP2K4 is present on tyrosine 185. Positions 366 to 375 (RSKNGVKDQP) are enriched in basic and acidic residues. The interval 366–423 (RSKNGVKDQPSDAAVSSKATPSQSSSINDISSMSTEHTLASDTDSSLDASTGPLEGCR) is disordered. A compositionally biased stretch (low complexity) spans 387–416 (SQSSSINDISSMSTEHTLASDTDSSLDAST).

It belongs to the protein kinase superfamily. CMGC Ser/Thr protein kinase family. MAP kinase subfamily. In terms of assembly, interacts with MECOM. Binds to at least four scaffolding proteins, MAPK8IP1/JIP-1, MAPK8IP2/JIP-2, MAPK8IP3/JIP-3/JSAP1 and SPAG9/MAPK8IP4/JIP-4. These proteins also bind other components of the JNK signaling pathway. Interacts with NFATC4. Interacts with ATF7; the interaction does not phosphorylate ATF7 but acts as a docking site for ATF7-associated partners such as JUN. Interacts with BCL10. Interacts with CTNNB1 and GSK3B. Interacts with DCLK2. Interacts with MAPKBP1. Interacts with POU5F1; phosphorylates POU5F1 at 'Ser-347'. Found in a complex with SH3RF1, RAC2, MAP3K7/TAK1, MAP2K7/MKK7, MAPK8IP1/JIP1 and MAPK8/JNK1. Mg(2+) is required as a cofactor. In terms of processing, dually phosphorylated on Thr-183 and Tyr-185 by MAP2K7 and MAP2K4, which activates the enzyme. Autophosphorylated in vitro.

Its subcellular location is the cytoplasm. It is found in the nucleus. It catalyses the reaction L-seryl-[protein] + ATP = O-phospho-L-seryl-[protein] + ADP + H(+). It carries out the reaction L-threonyl-[protein] + ATP = O-phospho-L-threonyl-[protein] + ADP + H(+). With respect to regulation, activated by threonine and tyrosine phosphorylation by either of two dual specificity kinases, MAP2K4 and MAP2K7. MAP2K4 shows a strong preference for Tyr-185 while MAP2K7 phosphorylates Tyr-183 preferentially. Inhibited by dual specificity phosphatases, such as DUSP1. Its function is as follows. Serine/threonine-protein kinase involved in various processes such as cell proliferation, differentiation, migration, transformation and programmed cell death. Extracellular stimuli such as pro-inflammatory cytokines or physical stress stimulate the stress-activated protein kinase/c-Jun N-terminal kinase (SAP/JNK) signaling pathway. In this cascade, two dual specificity kinases MAP2K4/MKK4 and MAP2K7/MKK7 phosphorylate and activate MAPK9/JNK2. In turn, MAPK9/JNK2 phosphorylates a number of transcription factors, primarily components of AP-1 such as JUN and ATF2 and thus regulates AP-1 transcriptional activity. In response to oxidative or ribotoxic stresses, inhibits rRNA synthesis by phosphorylating and inactivating the RNA polymerase 1-specific transcription initiation factor RRN3. Promotes stressed cell apoptosis by phosphorylating key regulatory factors including TP53 and YAP1. In T-cells, MAPK8 and MAPK9 are required for polarized differentiation of T-helper cells into Th1 cells. Upon T-cell receptor (TCR) stimulation, is activated by CARMA1, BCL10, MAP2K7 and MAP3K7/TAK1 to regulate JUN protein levels. Plays an important role in the osmotic stress-induced epithelial tight-junctions disruption. When activated, promotes beta-catenin/CTNNB1 degradation and inhibits the canonical Wnt signaling pathway. Also participates in neurite growth in spiral ganglion neurons. Phosphorylates the CLOCK-BMAL1 heterodimer and plays a role in the regulation of the circadian clock. Phosphorylates POU5F1, which results in the inhibition of POU5F1's transcriptional activity and enhances its proteasomal degradation. Phosphorylates ALKBH5 in response to reactive oxygen species (ROS), promoting ALKBH5 sumoylation and inactivation. The sequence is that of Mitogen-activated protein kinase 9 (Mapk9) from Rattus norvegicus (Rat).